A 1708-amino-acid chain; its full sequence is Clathrin heavy chain 2 (1708 aa).

Residues 1–492 (MAAANAPIAM…VDNDLALKIY (492 aa)) are globular terminal domain. 7 WD40-like repeat regions span residues 25-67 (FVTF…RPIT), 68-113 (ADSA…MPEQ), 114-155 (VVFW…ANLA), 156-205 (NNQI…QALE), 206-270 (AHAA…PDFQ), 271-314 (DDFP…ISPD), and 315-343 (PIFL…ATVN). The tract at residues 462-478 (ENWLAEDKLECSEELGD) is binding site for the uncoating ATPase, involved in lattice disassembly. Residues 493–536 (IKARATPKVVAAFAERREFDKILIYSKQVGYTPDYLFLLQTILR) form a flexible linker region. Residues 537-648 (TDPQGAVNFA…RALQHYTELP (112 aa)) are distal segment. The segment at 537 to 1708 (TDPQGAVNFA…AYGMPPMGSY (1172 aa)) is heavy chain arm. 7 CHCR repeats span residues 551 to 697 (QMEG…QIVV), 700 to 842 (AKEY…PEDF), 847 to 986 (ILSV…QLID), 993 to 1138 (LPES…VSEA), 1142 to 1283 (FIRA…FRLA), 1288 to 1434 (LNII…DLIN), and 1437 to 1580 (LNVL…KECF). The proximal segment stretch occupies residues 653-1708 (VMVNTHAIEP…AYGMPPMGSY (1056 aa)). The interval 1227–1536 (AAKIIYAFIS…YIYKKAGRWK (310 aa)) is involved in binding clathrin light chain. Positions 1564–1708 (SEDLLVYFIE…AYGMPPMGSY (145 aa)) are trimerization.

The protein belongs to the clathrin heavy chain family. Clathrin triskelions, composed of 3 heavy chains and 3 light chains, are the basic subunits of the clathrin coat.

The protein resides in the cytoplasmic vesicle membrane. The protein localises to the membrane. It localises to the coated pit. Clathrin is the major protein of the polyhedral coat of coated pits and vesicles. The protein is Clathrin heavy chain 2 of Oryza sativa subsp. japonica (Rice).